The following is a 160-amino-acid chain: MRIGHGYDVHKFGGEGPIIIGGVRIPYEQGLLAHSDGDVVLHAVTDAILGAVAMGDIGTLFPDTDPAYKGADSRVLLREAFSRVMAKGYRIGNLDVTIIAQAPKMLPHTPQMRVNIAEDLHCHVDDINVKATTTEKLGFVGRKEGIACEAVVLLIKESLS.

Residues Asp-8 and His-10 each coordinate a divalent metal cation. 4-CDP-2-C-methyl-D-erythritol 2-phosphate-binding positions include 8–10 (DVH) and 34–35 (HS). His-42 contributes to the a divalent metal cation binding site. 4-CDP-2-C-methyl-D-erythritol 2-phosphate is bound by residues 56–58 (DIG), 61–65 (FPDTD), 100–106 (AQAPKML), 132–135 (TTTE), Phe-139, and Arg-142.

This sequence belongs to the IspF family. In terms of assembly, homotrimer. A divalent metal cation is required as a cofactor.

The catalysed reaction is 4-CDP-2-C-methyl-D-erythritol 2-phosphate = 2-C-methyl-D-erythritol 2,4-cyclic diphosphate + CMP. It functions in the pathway isoprenoid biosynthesis; isopentenyl diphosphate biosynthesis via DXP pathway; isopentenyl diphosphate from 1-deoxy-D-xylulose 5-phosphate: step 4/6. Functionally, involved in the biosynthesis of isopentenyl diphosphate (IPP) and dimethylallyl diphosphate (DMAPP), two major building blocks of isoprenoid compounds. Catalyzes the conversion of 4-diphosphocytidyl-2-C-methyl-D-erythritol 2-phosphate (CDP-ME2P) to 2-C-methyl-D-erythritol 2,4-cyclodiphosphate (ME-CPP) with a corresponding release of cytidine 5-monophosphate (CMP). This Proteus mirabilis (strain HI4320) protein is 2-C-methyl-D-erythritol 2,4-cyclodiphosphate synthase.